The primary structure comprises 384 residues: Probable L-tyrosine/L-aspartate decarboxylase (384 aa).

Residue lysine 233 is modified to N6-(pyridoxal phosphate)lysine.

This sequence belongs to the group II decarboxylase family. MfnA subfamily. The cofactor is pyridoxal 5'-phosphate.

It catalyses the reaction L-tyrosine + H(+) = tyramine + CO2. The catalysed reaction is L-aspartate + H(+) = beta-alanine + CO2. Its pathway is cofactor biosynthesis; methanofuran biosynthesis. The protein operates within cofactor biosynthesis; coenzyme A biosynthesis. Functionally, catalyzes the decarboxylation of L-tyrosine to produce tyramine for methanofuran biosynthesis. Can also catalyze the decarboxylation of L-aspartate to produce beta-alanine for coenzyme A (CoA) biosynthesis. This is Probable L-tyrosine/L-aspartate decarboxylase from Methanococcus maripaludis (strain C5 / ATCC BAA-1333).